Consider the following 299-residue polypeptide: tRNA dimethylallyltransferase (299 aa).

Residue 13 to 20 participates in ATP binding; that stretch reads GPTASGKT. 15–20 serves as a coordination point for substrate; that stretch reads TASGKT. An interaction with substrate tRNA region spans residues 38–41; the sequence is DSRQ.

Belongs to the IPP transferase family. As to quaternary structure, monomer. Mg(2+) is required as a cofactor.

The enzyme catalyses adenosine(37) in tRNA + dimethylallyl diphosphate = N(6)-dimethylallyladenosine(37) in tRNA + diphosphate. Catalyzes the transfer of a dimethylallyl group onto the adenine at position 37 in tRNAs that read codons beginning with uridine, leading to the formation of N6-(dimethylallyl)adenosine (i(6)A). The protein is tRNA dimethylallyltransferase of Prochlorococcus marinus (strain MIT 9313).